The chain runs to 120 residues: Large ribosomal subunit protein uL18 (120 aa).

The span at 1–10 (MKLTRRESKE) shows a compositional bias: basic and acidic residues. Residues 1–26 (MKLTRRESKERRHRRVRGKVQGSPER) are disordered.

Belongs to the universal ribosomal protein uL18 family. Part of the 50S ribosomal subunit; part of the 5S rRNA/L5/L18/L25 subcomplex. Contacts the 5S and 23S rRNAs.

Its function is as follows. This is one of the proteins that bind and probably mediate the attachment of the 5S RNA into the large ribosomal subunit, where it forms part of the central protuberance. The polypeptide is Large ribosomal subunit protein uL18 (Nostoc sp. (strain PCC 7120 / SAG 25.82 / UTEX 2576)).